We begin with the raw amino-acid sequence, 97 residues long: MSVSIKPLEDRIVVRPLEAEQTTASGLLIPDSAQEKPQEGEVVAVGPGRFEDGNRVPVDVAVGDVVIYSKYGGTEVKTGGTEYLVLSARDVLAIVVK.

It belongs to the GroES chaperonin family. As to quaternary structure, heptamer of 7 subunits arranged in a ring. Interacts with the chaperonin GroEL.

It localises to the cytoplasm. Functionally, together with the chaperonin GroEL, plays an essential role in assisting protein folding. The GroEL-GroES system forms a nano-cage that allows encapsulation of the non-native substrate proteins and provides a physical environment optimized to promote and accelerate protein folding. GroES binds to the apical surface of the GroEL ring, thereby capping the opening of the GroEL channel. The polypeptide is Co-chaperonin GroES (Pseudarthrobacter chlorophenolicus (strain ATCC 700700 / DSM 12829 / CIP 107037 / JCM 12360 / KCTC 9906 / NCIMB 13794 / A6) (Arthrobacter chlorophenolicus)).